Here is a 77-residue protein sequence, read N- to C-terminus: Metallothionein-like protein type 2 (77 aa).

This sequence belongs to the metallothionein superfamily. Type 15 family. Expressed in the left, stem and flower, at very low levels in roots and is not detectable in mesophyll protoplasts.

In terms of biological role, metallothioneins have a high content of cysteine residues that bind various heavy metals. The sequence is that of Metallothionein-like protein type 2 (MTI) from Vicia faba (Broad bean).